Here is a 209-residue protein sequence, read N- to C-terminus: 2-phospho-L-lactate guanylyltransferase (209 aa).

The protein belongs to the CofC family. As to quaternary structure, homodimer.

The enzyme catalyses (2S)-2-phospholactate + GTP + H(+) = (2S)-lactyl-2-diphospho-5'-guanosine + diphosphate. It functions in the pathway cofactor biosynthesis; coenzyme F420 biosynthesis. In terms of biological role, guanylyltransferase that catalyzes the activation of (2S)-2-phospholactate (2-PL) as (2S)-lactyl-2-diphospho-5'-guanosine, via the condensation of 2-PL with GTP. It is involved in the biosynthesis of coenzyme F420, a hydride carrier cofactor. The polypeptide is 2-phospho-L-lactate guanylyltransferase (Methanosphaerula palustris (strain ATCC BAA-1556 / DSM 19958 / E1-9c)).